Here is a 226-residue protein sequence, read N- to C-terminus: Cytidylate kinase (226 aa).

10–18 serves as a coordination point for ATP; sequence GPAGAGKST.

The protein belongs to the cytidylate kinase family. Type 1 subfamily.

It is found in the cytoplasm. The catalysed reaction is CMP + ATP = CDP + ADP. It catalyses the reaction dCMP + ATP = dCDP + ADP. This chain is Cytidylate kinase, found in Caldicellulosiruptor saccharolyticus (strain ATCC 43494 / DSM 8903 / Tp8T 6331).